The following is a 101-amino-acid chain: Phosphoribosyl-AMP cyclohydrolase (101 aa).

A Mg(2+)-binding site is contributed by Asp-71. Cys-72 is a binding site for Zn(2+). The Mg(2+) site is built by Asp-73 and Asp-75. The Zn(2+) site is built by Cys-88 and Cys-95.

This sequence belongs to the PRA-CH family. Homodimer. Mg(2+) is required as a cofactor. The cofactor is Zn(2+).

The protein localises to the cytoplasm. It catalyses the reaction 1-(5-phospho-beta-D-ribosyl)-5'-AMP + H2O = 1-(5-phospho-beta-D-ribosyl)-5-[(5-phospho-beta-D-ribosylamino)methylideneamino]imidazole-4-carboxamide. It functions in the pathway amino-acid biosynthesis; L-histidine biosynthesis; L-histidine from 5-phospho-alpha-D-ribose 1-diphosphate: step 3/9. Catalyzes the hydrolysis of the adenine ring of phosphoribosyl-AMP. This Bacillus cereus (strain G9842) protein is Phosphoribosyl-AMP cyclohydrolase.